A 165-amino-acid polypeptide reads, in one-letter code: Nucleotide-binding protein MXAN_1478 (165 aa).

The protein belongs to the YajQ family.

Its function is as follows. Nucleotide-binding protein. The chain is Nucleotide-binding protein MXAN_1478 from Myxococcus xanthus (strain DK1622).